Consider the following 420-residue polypeptide: UDP-glucuronic acid decarboxylase 1 (420 aa).

Residue Met1 is modified to N-acetylmethionine. At 1-19 the chain is on the cytoplasmic side; the sequence is MVSKGLLRLVSSVNRRKMK. Residues 20–40 form a helical; Signal-anchor for type II membrane protein membrane-spanning segment; sequence LLLGIALFAYAASVWGNFVNM. Over 41 to 420 the chain is Lumenal; that stretch reads RSIQENGELK…RVKKGRTRHS (380 aa). Thr94 carries the phosphothreonine modification. NAD(+) contacts are provided by Gly98, Phe99, Val100, Asp119, Asn120, Phe122, Thr123, Gly124, Asp144, and Val145. Residues Leu149 and Tyr150 each contribute to the UDP-alpha-D-glucuronate site. Residues Leu159 and Ser161 each coordinate NAD(+). Lys177 is a binding site for UDP-alpha-D-glucuronate. Thr178 lines the NAD(+) pocket. 4 residues coordinate UDP-alpha-D-glucuronate: Asn185, Gly188, Lys191, and Arg192. Residues Ala200, Tyr231, and Lys235 each coordinate NAD(+). Residue Tyr231 is the Proton acceptor of the active site. UDP-alpha-D-glucuronate is bound by residues Tyr245, Gln248, and Glu249. Positions 261, 267, and 272 each coordinate NAD(+). Asn316 carries an N-linked (GlcNAc...) asparagine glycan.

It belongs to the NAD(P)-dependent epimerase/dehydratase family. UDP-glucuronic acid decarboxylase subfamily. In terms of assembly, homodimer and homotetramer. Interacts with AKT1. NAD(+) is required as a cofactor. In terms of tissue distribution, ubiquitous. Detected in heart, brain, spleen, lung, testis, liver, skeletal muscle and kidney.

Its subcellular location is the golgi apparatus. The protein resides in the golgi stack membrane. The enzyme catalyses UDP-alpha-D-glucuronate + H(+) = UDP-alpha-D-xylose + CO2. It participates in nucleotide-sugar biosynthesis; UDP-alpha-D-xylose biosynthesis; UDP-alpha-D-xylose from UDP-alpha-D-glucuronate: step 1/1. Functionally, catalyzes the NAD-dependent decarboxylation of UDP-glucuronic acid to UDP-xylose. Necessary for the biosynthesis of the core tetrasaccharide in glycosaminoglycan biosynthesis. In Rattus norvegicus (Rat), this protein is UDP-glucuronic acid decarboxylase 1.